Here is a 776-residue protein sequence, read N- to C-terminus: MNKKILQILEYDKVKEQFMNALTTAQGQKELSDLVPLTDKDKIQLLFDEVADFRLLTQENGLLNLGKTNDLTEILRRLELEASLSGKEFVEIKKVIQLGINIQRFFDEAENVETPSLNITLEKLVDLSGLIKKLEIFDNAGSLYDNASLELMHIRSSIKSHQSEIRKIMQEMLTKNLASLSENVITIRNDRQVLPVKAENKNKIAGVVHDMSASGQTLYIEPNAVVSLNNKLNQKRIEERQEITRIYRELAEELKPYSFDIRQNAWLIGHIDFVRAKYLYLAANKASLPALTNDKDIILFAARHPLIDAKMVVANDIKFDRTLNTIVITGPNTGGKTITLKTVGLLTILAQSGLPILADDGSRIHLFDDIFADIGDEQSIEQSLSTFSSHMTNIVQILAQADENSLVLFDELGAGTDPKEGAALAIAILENLRKRNVKTMASTHYPELKAYGVKTQQVINASMEFNIDKMQPTYHLQLGVPGRSNALEISRRLGLPETIISEAGQQISGSEHDVNQMIEKLEEKTREVIESSRNIKKIERENQSLHKDLTKVYNQINRERDFELEKAQKEAQEVVKKASLEAQEILKNLNDKAALKPHEIIAARKELEGLAPTIDFSKNKVLKKAKAQRGLKQGAEVNVTSYGQRGKLIRLEKDGRWTVQMGSITTRLSEEEFEVIETPEQIQAKTKNVSKKVTSKVKAQLDLRGMRYEEAELELDNYIDQALLANLIQITIVHGIGTGVIREMVQKKLQKHRHIKSYEYAPINAGGSGATIAILK.

ATP is bound at residue 330-337; sequence GPNTGGKT. Residues 701–776 form the Smr domain; it reads LDLRGMRYEE…GSGATIAILK (76 aa).

This sequence belongs to the DNA mismatch repair MutS family. MutS2 subfamily. Homodimer. Binds to stalled ribosomes, contacting rRNA.

Functionally, endonuclease that is involved in the suppression of homologous recombination and thus may have a key role in the control of bacterial genetic diversity. Acts as a ribosome collision sensor, splitting the ribosome into its 2 subunits. Detects stalled/collided 70S ribosomes which it binds and splits by an ATP-hydrolysis driven conformational change. Acts upstream of the ribosome quality control system (RQC), a ribosome-associated complex that mediates the extraction of incompletely synthesized nascent chains from stalled ribosomes and their subsequent degradation. Probably generates substrates for RQC. This Lactococcus lactis subsp. cremoris (strain SK11) protein is Endonuclease MutS2.